Here is a 411-residue protein sequence, read N- to C-terminus: Serine hydroxymethyltransferase (411 aa).

(6S)-5,6,7,8-tetrahydrofolate-binding positions include L119 and 123–125; that span reads GHL. K228 is subject to N6-(pyridoxal phosphate)lysine. Position 351–353 (351–353) interacts with (6S)-5,6,7,8-tetrahydrofolate; the sequence is SPF.

Belongs to the SHMT family. In terms of assembly, homodimer. Pyridoxal 5'-phosphate is required as a cofactor.

It is found in the cytoplasm. The enzyme catalyses (6R)-5,10-methylene-5,6,7,8-tetrahydrofolate + glycine + H2O = (6S)-5,6,7,8-tetrahydrofolate + L-serine. Its pathway is one-carbon metabolism; tetrahydrofolate interconversion. It functions in the pathway amino-acid biosynthesis; glycine biosynthesis; glycine from L-serine: step 1/1. Catalyzes the reversible interconversion of serine and glycine with tetrahydrofolate (THF) serving as the one-carbon carrier. This reaction serves as the major source of one-carbon groups required for the biosynthesis of purines, thymidylate, methionine, and other important biomolecules. Also exhibits THF-independent aldolase activity toward beta-hydroxyamino acids, producing glycine and aldehydes, via a retro-aldol mechanism. The polypeptide is Serine hydroxymethyltransferase (Clostridium botulinum (strain Alaska E43 / Type E3)).